The sequence spans 85 residues: MAIFKSISSISNPTGSMGSSIGTSNIDGLTNNNNSIACFDSDYSGLNGLGGLGGFNGGGCGGCGDSNTNIINIDIDLCRRGHRCC.

The protein belongs to the UPF0512 family.

The sequence is that of UPF0512 protein U from Dictyostelium discoideum (Social amoeba).